The chain runs to 249 residues: NADH-quinone oxidoreductase subunit C (249 aa).

It belongs to the complex I 30 kDa subunit family. In terms of assembly, NDH-1 is composed of 14 different subunits. Subunits NuoB, C, D, E, F, and G constitute the peripheral sector of the complex.

It is found in the cell inner membrane. The enzyme catalyses a quinone + NADH + 5 H(+)(in) = a quinol + NAD(+) + 4 H(+)(out). Its function is as follows. NDH-1 shuttles electrons from NADH, via FMN and iron-sulfur (Fe-S) centers, to quinones in the respiratory chain. The immediate electron acceptor for the enzyme in this species is believed to be ubiquinone. Couples the redox reaction to proton translocation (for every two electrons transferred, four hydrogen ions are translocated across the cytoplasmic membrane), and thus conserves the redox energy in a proton gradient. This Xylella fastidiosa (strain M12) protein is NADH-quinone oxidoreductase subunit C.